The following is a 208-amino-acid chain: Na(+)-translocating NADH-quinone reductase subunit D (208 aa).

5 consecutive transmembrane segments (helical) span residues 42-62, 72-92, 103-123, 131-151, and 178-198; these read IVMGISVALVTGFSSFFISLV, IIVQMAIIASLVTLVDQLLQA, VFVGLIITNCIVMGRAEAFAM, LIDGIGNGAGYGIMLLVVATV, and NGLFLLAPSAFFIIGFLIWGL.

It belongs to the NqrDE/RnfAE family. As to quaternary structure, composed of six subunits; NqrA, NqrB, NqrC, NqrD, NqrE and NqrF.

The protein localises to the cell inner membrane. It carries out the reaction a ubiquinone + n Na(+)(in) + NADH + H(+) = a ubiquinol + n Na(+)(out) + NAD(+). NQR complex catalyzes the reduction of ubiquinone-1 to ubiquinol by two successive reactions, coupled with the transport of Na(+) ions from the cytoplasm to the periplasm. NqrA to NqrE are probably involved in the second step, the conversion of ubisemiquinone to ubiquinol. This chain is Na(+)-translocating NADH-quinone reductase subunit D, found in Neisseria meningitidis serogroup B (strain ATCC BAA-335 / MC58).